We begin with the raw amino-acid sequence, 146 residues long: Large ribosomal subunit protein uL15 (146 aa).

A disordered region spans residues 1-57 (MKLHELKPAQGSRKTRNRVGRGSSSGNGKTAGRGQKGQKARSGGNIRSGFEGGQTPL). Gly residues predominate over residues 23–35 (SSSGNGKTAGRGQ).

This sequence belongs to the universal ribosomal protein uL15 family. As to quaternary structure, part of the 50S ribosomal subunit.

Functionally, binds to the 23S rRNA. In Streptococcus mutans serotype c (strain ATCC 700610 / UA159), this protein is Large ribosomal subunit protein uL15.